Consider the following 230-residue polypeptide: Uracil-DNA glycosylase (230 aa).

Catalysis depends on Asp-72, which acts as the Proton acceptor.

This sequence belongs to the uracil-DNA glycosylase (UDG) superfamily. UNG family.

The protein localises to the cytoplasm. It catalyses the reaction Hydrolyzes single-stranded DNA or mismatched double-stranded DNA and polynucleotides, releasing free uracil.. Its function is as follows. Excises uracil residues from the DNA which can arise as a result of misincorporation of dUMP residues by DNA polymerase or due to deamination of cytosine. This Wolinella succinogenes (strain ATCC 29543 / DSM 1740 / CCUG 13145 / JCM 31913 / LMG 7466 / NCTC 11488 / FDC 602W) (Vibrio succinogenes) protein is Uracil-DNA glycosylase.